Consider the following 278-residue polypeptide: Phosphate import ATP-binding protein PstB (278 aa).

Residues 32 to 273 (YETRDLNLWY…PSDKRTEDYI (242 aa)) enclose the ABC transporter domain. Position 64 to 71 (64 to 71 (GPSGCGKS)) interacts with ATP.

The protein belongs to the ABC transporter superfamily. Phosphate importer (TC 3.A.1.7) family. The complex is composed of two ATP-binding proteins (PstB), two transmembrane proteins (PstC and PstA) and a solute-binding protein (PstS).

Its subcellular location is the cell membrane. It carries out the reaction phosphate(out) + ATP + H2O = ADP + 2 phosphate(in) + H(+). Functionally, part of the ABC transporter complex PstSACB involved in phosphate import. Responsible for energy coupling to the transport system. The polypeptide is Phosphate import ATP-binding protein PstB (Halalkalibacterium halodurans (strain ATCC BAA-125 / DSM 18197 / FERM 7344 / JCM 9153 / C-125) (Bacillus halodurans)).